A 396-amino-acid polypeptide reads, in one-letter code: 8-amino-7-oxononanoate synthase (396 aa).

R31 provides a ligand contact to substrate. 118–119 (GY) contributes to the pyridoxal 5'-phosphate binding site. Position 143 (H143) interacts with substrate. The pyridoxal 5'-phosphate site is built by S189, H217, and T245. Position 248 is an N6-(pyridoxal phosphate)lysine (K248). T362 serves as a coordination point for substrate.

It belongs to the class-II pyridoxal-phosphate-dependent aminotransferase family. BioF subfamily. As to quaternary structure, homodimer. It depends on pyridoxal 5'-phosphate as a cofactor.

It carries out the reaction 6-carboxyhexanoyl-[ACP] + L-alanine + H(+) = (8S)-8-amino-7-oxononanoate + holo-[ACP] + CO2. It functions in the pathway cofactor biosynthesis; biotin biosynthesis. Functionally, catalyzes the decarboxylative condensation of pimeloyl-[acyl-carrier protein] and L-alanine to produce 8-amino-7-oxononanoate (AON), [acyl-carrier protein], and carbon dioxide. This chain is 8-amino-7-oxononanoate synthase, found in Methylobacillus flagellatus (strain ATCC 51484 / DSM 6875 / VKM B-1610 / KT).